A 417-amino-acid chain; its full sequence is MNAEIMAVGSELLLGQIANTNGQFISKQLASIGVDVYRHTVVGDNEDRLKIALQEAYERADLVILTGGLGPTKDDLTKETVAAFCGKRLVYDENALHEIEDYFKRHNRVMTPNNKKQAYVIEGCTVLANRHGMAPGMLCELEDGKKLALLPGPPSEMKPMFVNELLPKLLGATEQTEITSRVLHFFGIGESQLETDLLDLIATQTNPTIAPLAGDGEVKLRLTVKHADKNEAARLLDETETLIRKRVGSYLYGYNETTLVKETFLRLQASGLTIASAESLTAGLFSSELAAFAGASHVLKGSVTAYSNELKQQLLQVSSATLASDGAISEACALEMARGVKTLYGSDIAISFTGVAGPGVQEGHEAGTVFLALLLPGGKERVYTLSLSGGRNAVRMRAVKFGYFYLLEELKRSNGSK.

Belongs to the CinA family.

In Shouchella clausii (strain KSM-K16) (Alkalihalobacillus clausii), this protein is Putative competence-damage inducible protein.